Reading from the N-terminus, the 220-residue chain is Phosphatidylinositol phosphate synthase (220 aa).

2 helical membrane-spanning segments follow: residues 21–46 and 52–72; these read LLRA…ALTL and LFWG…DGAM. Residue 29-32 coordinates a CDP-1,2-diacyl-sn-glycerol; it reads DTVT. D66 and D69 together coordinate Mg(2+). Positions 70, 74, and 80 each coordinate a CDP-1,2-diacyl-sn-glycerol. Mg(2+)-binding residues include D87 and D91. D91 (proton acceptor) is an active-site residue. The next 4 helical transmembrane spans lie at 93–110, 116–134, 154–171, and 177–194; these read VADG…AFGW, VVAT…YVKA, LIIV…GVQW, and MWVL…RMHA.

Belongs to the CDP-alcohol phosphatidyltransferase class-I family. Homodimer. Mg(2+) serves as cofactor.

The protein resides in the cell membrane. It carries out the reaction a CDP-1,2-diacyl-sn-glycerol + 1D-myo-inositol 3-phosphate = a 1,2-diacyl-sn-glycero-3-phospho-(1D-myo-inositol-3-phosphate) + CMP + H(+). The enzyme catalyses 1,2-di-(9Z-octadecenoyl)-sn-glycero-3-cytidine-5'-diphosphate + 1D-myo-inositol 3-phosphate = 1,2-di-(9Z-octadecenoyl)-sn-glycero-3-phospho-(1D-myo-inositol-3-phosphate) + CMP + H(+). Its pathway is phospholipid metabolism; phosphatidylinositol phosphate biosynthesis. In terms of biological role, catalyzes the conjugation of the 1'-hydroxyl group of D-myo-inositol-3-phosphate (also named L-myo-inositol-1-phosphate) with a lipid tail of cytidine diphosphate diacylglycerol (CDP-DAG), forming phosphatidylinositol phosphate (PIP) and CMP. PIP is a precursor of phosphatidylinositol (PI) which is an essential lipid for mycobacteria required for formation of their cell wall. The polypeptide is Phosphatidylinositol phosphate synthase (Mycobacteroides abscessus (strain ATCC 19977 / DSM 44196 / CCUG 20993 / CIP 104536 / JCM 13569 / NCTC 13031 / TMC 1543 / L948) (Mycobacterium abscessus)).